Reading from the N-terminus, the 1312-residue chain is Bifunctional protein PutA (1312 aa).

The proline dehydrogenase stretch occupies residues 228–574 (LSRSLNRIIG…SFVNRIADNT (347 aa)). The interval 653-1119 (QPVAEGEMQP…LSSRPQDAVG (467 aa)) is aldehyde dehydrogenase. Active-site residues include glutamate 883 and cysteine 917.

It in the N-terminal section; belongs to the proline dehydrogenase family. This sequence in the C-terminal section; belongs to the aldehyde dehydrogenase family. The cofactor is FAD.

The enzyme catalyses L-proline + a quinone = (S)-1-pyrroline-5-carboxylate + a quinol + H(+). It catalyses the reaction L-glutamate 5-semialdehyde + NAD(+) + H2O = L-glutamate + NADH + 2 H(+). It participates in amino-acid degradation; L-proline degradation into L-glutamate; L-glutamate from L-proline: step 1/2. It functions in the pathway amino-acid degradation; L-proline degradation into L-glutamate; L-glutamate from L-proline: step 2/2. Oxidizes proline to glutamate for use as a carbon and nitrogen source and also function as a transcriptional repressor of the put operon. In Klebsiella aerogenes (Enterobacter aerogenes), this protein is Bifunctional protein PutA (putA).